A 287-amino-acid chain; its full sequence is Oxaloacetate decarboxylase (287 aa).

Substrate is bound at residue serine 50. Aspartate 88 serves as a coordination point for Mg(2+). Residues arginine 159 and histidine 235 each coordinate substrate.

This sequence belongs to the isocitrate lyase family. Oxaloacetate decarboxylase subfamily. In terms of assembly, homotetramer; dimer of dimers. It depends on Mg(2+) as a cofactor.

It carries out the reaction oxaloacetate + H(+) = pyruvate + CO2. Its function is as follows. Catalyzes the decarboxylation of oxaloacetate into pyruvate. Seems to play a role in maintaining cellular concentrations of bicarbonate and pyruvate. This Pseudomonas aeruginosa (strain LESB58) protein is Oxaloacetate decarboxylase.